Reading from the N-terminus, the 92-residue chain is Small ribosomal subunit protein uS19 (92 aa).

Belongs to the universal ribosomal protein uS19 family.

Its function is as follows. Protein S19 forms a complex with S13 that binds strongly to the 16S ribosomal RNA. This is Small ribosomal subunit protein uS19 from Brucella ovis (strain ATCC 25840 / 63/290 / NCTC 10512).